The chain runs to 40 residues: Antifungal protein ginkbilobin-1 (40 aa).

The 38-residue stretch at 3–40 (TAFVSSAHNTQKIPAGAPFNRNLRAMLADLRQNAAFAG) folds into the Gnk2-homologous domain. Alpha-D-mannopyranose is bound at residue Asn11.

Expressed in seeds (at the protein level).

In terms of biological role, possesses antifungal activity against B.cinerea, M.arachidicola, F.oxysporum, R.solani and C.comatus and moderate antibacterial activity against S.aureus, P.aeruginosa and E.coli. Inhibits HIV-1 reverse transcriptase and proliferation of murine splenocytes. Exerts antifungal activity through its carbohydrate-binding specificity. In Ginkgo biloba (Ginkgo), this protein is Antifungal protein ginkbilobin-1.